We begin with the raw amino-acid sequence, 294 residues long: Acetyl-coenzyme A carboxylase carboxyl transferase subunit beta (294 aa).

One can recognise a CoA carboxyltransferase N-terminal domain in the interval 25–294 (IWTKCDNCGQ…PKVDYRHCVE (270 aa)). Zn(2+)-binding residues include Cys-29, Cys-32, Cys-48, and Cys-51. Residues 29 to 51 (CDNCGQLLYKKELERNLEVCPKC) form a C4-type zinc finger.

Belongs to the AccD/PCCB family. Acetyl-CoA carboxylase is a heterohexamer composed of biotin carboxyl carrier protein (AccB), biotin carboxylase (AccC) and two subunits each of ACCase subunit alpha (AccA) and ACCase subunit beta (AccD). It depends on Zn(2+) as a cofactor.

It localises to the cytoplasm. The catalysed reaction is N(6)-carboxybiotinyl-L-lysyl-[protein] + acetyl-CoA = N(6)-biotinyl-L-lysyl-[protein] + malonyl-CoA. It participates in lipid metabolism; malonyl-CoA biosynthesis; malonyl-CoA from acetyl-CoA: step 1/1. Its function is as follows. Component of the acetyl coenzyme A carboxylase (ACC) complex. Biotin carboxylase (BC) catalyzes the carboxylation of biotin on its carrier protein (BCCP) and then the CO(2) group is transferred by the transcarboxylase to acetyl-CoA to form malonyl-CoA. The polypeptide is Acetyl-coenzyme A carboxylase carboxyl transferase subunit beta (Blochmanniella pennsylvanica (strain BPEN)).